Reading from the N-terminus, the 144-residue chain is Large ribosomal subunit protein uL11 (144 aa).

This sequence belongs to the universal ribosomal protein uL11 family. As to quaternary structure, part of the ribosomal stalk of the 50S ribosomal subunit. Interacts with L10 and the large rRNA to form the base of the stalk. L10 forms an elongated spine to which L12 dimers bind in a sequential fashion forming a multimeric L10(L12)X complex. One or more lysine residues are methylated.

In terms of biological role, forms part of the ribosomal stalk which helps the ribosome interact with GTP-bound translation factors. This chain is Large ribosomal subunit protein uL11, found in Streptomyces griseus subsp. griseus (strain JCM 4626 / CBS 651.72 / NBRC 13350 / KCC S-0626 / ISP 5235).